A 1070-amino-acid chain; its full sequence is DNA-directed RNA polymerase subunit beta (1070 aa).

The protein belongs to the RNA polymerase beta chain family. As to quaternary structure, in plastids the minimal PEP RNA polymerase catalytic core is composed of four subunits: alpha, beta, beta', and beta''. When a (nuclear-encoded) sigma factor is associated with the core the holoenzyme is formed, which can initiate transcription.

The protein localises to the plastid. Its subcellular location is the chloroplast. It catalyses the reaction RNA(n) + a ribonucleoside 5'-triphosphate = RNA(n+1) + diphosphate. In terms of biological role, DNA-dependent RNA polymerase catalyzes the transcription of DNA into RNA using the four ribonucleoside triphosphates as substrates. The polypeptide is DNA-directed RNA polymerase subunit beta (Platanus occidentalis (Sycamore)).